An 88-amino-acid chain; its full sequence is MKKILIGGIRLYQKYISRFTPATCRFYPTCSAYGIEAIQTHGALKGSYLAIRRISKCHPFHKGGLDFVPPKKDKNADSEHSCKAHHHH.

A disordered region spans residues 66-88; the sequence is DFVPPKKDKNADSEHSCKAHHHH. The span at 69-82 shows a compositional bias: basic and acidic residues; that stretch reads PPKKDKNADSEHSC.

It belongs to the UPF0161 family.

Its subcellular location is the cell membrane. Functionally, could be involved in insertion of integral membrane proteins into the membrane. This Listeria monocytogenes serotype 4a (strain HCC23) protein is Putative membrane protein insertion efficiency factor.